The primary structure comprises 141 residues: Hemoglobin subunit alpha-D (141 aa).

One can recognise a Globin domain in the interval 1-141 (MLSADEKQLI…VSDVLAEKYR (141 aa)). Heme b-binding residues include histidine 58 and histidine 87.

It belongs to the globin family. In terms of assembly, heterotetramer of two alpha-D chains and two beta chains. As to expression, red blood cells.

Involved in oxygen transport from the lung to the various peripheral tissues. In Phrynops hilarii (Snake-necked turtle), this protein is Hemoglobin subunit alpha-D (HBAD).